The primary structure comprises 381 residues: Putative acyl-CoA dehydrogenase YdbM (381 aa).

Residues 158-160 (FTT) and 337-341 (RIVGA) each bind FAD.

Belongs to the acyl-CoA dehydrogenase family. FAD is required as a cofactor.

In Bacillus subtilis (strain 168), this protein is Putative acyl-CoA dehydrogenase YdbM (ydbM).